Here is a 437-residue protein sequence, read N- to C-terminus: MTNATSAPPARADRAPASKALFDRAAAVLPGGVNSPVRAFRAVGGDPLFIARAQGARLFDADGAEYIDYVGSWGPAILGHAHPAVIEAVREAALGGLSFGAPTELEVRFAEKIRELYPSIDMLRCVSSGTEATMSAIRVARGFTRRDAIIKFEGCYHGHADHLLVKAGSGLATFGAPDSAGVPESIARTTLSLPYNDPAALEAAFAARGGDIAAVILEPVVGNMGCVPPEPGFLALVIDLCRKHGALSIFDEVMTGCRLARGGAQERFGLRPDLTTLGKIVGGGMPLAAYGGRADVMRVVSPLGPVYQAGTLSGNPLAVTAGLATLDRLTPALYERLEELGASLEEGLRAAAEGAGAAACVQRVGSMITLFFTKGPVRSWADAATSDTKRFSAFHAAMLARGIYWPPSQYEAAFLSGAHSEEDIERTIAACREALAA.

The residue at position 279 (Lys-279) is an N6-(pyridoxal phosphate)lysine.

It belongs to the class-III pyridoxal-phosphate-dependent aminotransferase family. HemL subfamily. Homodimer. Pyridoxal 5'-phosphate is required as a cofactor.

It is found in the cytoplasm. The catalysed reaction is (S)-4-amino-5-oxopentanoate = 5-aminolevulinate. The protein operates within porphyrin-containing compound metabolism; protoporphyrin-IX biosynthesis; 5-aminolevulinate from L-glutamyl-tRNA(Glu): step 2/2. This is Glutamate-1-semialdehyde 2,1-aminomutase from Sorangium cellulosum (strain So ce56) (Polyangium cellulosum (strain So ce56)).